Here is a 214-residue protein sequence, read N- to C-terminus: Orotate phosphoribosyltransferase (214 aa).

A 5-phospho-alpha-D-ribose 1-diphosphate-binding site is contributed by K26. 34–35 (FF) lines the orotate pocket. 5-phospho-alpha-D-ribose 1-diphosphate contacts are provided by residues 72-73 (YK), R98, K99, K102, H104, and 123-131 (DDVISAGTS). Positions 127 and 155 each coordinate orotate.

This sequence belongs to the purine/pyrimidine phosphoribosyltransferase family. PyrE subfamily. As to quaternary structure, homodimer. Mg(2+) is required as a cofactor.

It carries out the reaction orotidine 5'-phosphate + diphosphate = orotate + 5-phospho-alpha-D-ribose 1-diphosphate. It participates in pyrimidine metabolism; UMP biosynthesis via de novo pathway; UMP from orotate: step 1/2. Functionally, catalyzes the transfer of a ribosyl phosphate group from 5-phosphoribose 1-diphosphate to orotate, leading to the formation of orotidine monophosphate (OMP). The sequence is that of Orotate phosphoribosyltransferase from Chromobacterium violaceum (strain ATCC 12472 / DSM 30191 / JCM 1249 / CCUG 213 / NBRC 12614 / NCIMB 9131 / NCTC 9757 / MK).